The following is a 215-amino-acid chain: L-fuculose phosphate aldolase (215 aa).

Residues 28–29 (GN), 43–44 (TG), and 71–72 (SS) contribute to the substrate site. The Proton donor/acceptor role is filled by glutamate 73. 4 residues coordinate Zn(2+): glutamate 73, histidine 92, histidine 94, and histidine 155.

The protein belongs to the aldolase class II family. AraD/FucA subfamily. In terms of assembly, homotetramer. It depends on Zn(2+) as a cofactor.

The enzyme catalyses L-fuculose 1-phosphate = (S)-lactaldehyde + dihydroxyacetone phosphate. It functions in the pathway carbohydrate degradation; L-fucose degradation; L-lactaldehyde and glycerone phosphate from L-fucose: step 3/3. Functionally, involved in the degradation of L-fucose and D-arabinose. Catalyzes the reversible cleavage of L-fuculose 1-phosphate (Fuc1P) to yield dihydroxyacetone phosphate (DHAP) and L-lactaldehyde. This Escherichia coli O6:H1 (strain CFT073 / ATCC 700928 / UPEC) protein is L-fuculose phosphate aldolase.